The chain runs to 718 residues: ATP-dependent RNA helicase homolog DQX1 (718 aa).

One can recognise a Helicase ATP-binding domain in the interval 54–222; it reads HLESSPTGVV…WGNSPIVRVP (169 aa). 67–74 serves as a coordination point for ATP; it reads GDPGSGKS. The DEAQ box signature appears at 167–170; the sequence is DEAQ. Residues 245-447 enclose the Helicase C-terminal domain; that stretch reads ACQAVLELCQ…ALMRALEDLD (203 aa). Positions 690–718 are disordered; the sequence is QLREGTAEPPAAATETSSPQEYGDGCVLQ. Positions 696–708 are enriched in low complexity; the sequence is AEPPAAATETSSP.

In terms of tissue distribution, ubiquitous.

The protein resides in the nucleus. In terms of biological role, might be involved in RNA metabolism; it is missing helicase motif III and may not have helicase activity. In Mus musculus (Mouse), this protein is ATP-dependent RNA helicase homolog DQX1 (Dqx1).